A 108-amino-acid chain; its full sequence is C-C motif chemokine 19 (108 aa).

The signal sequence occupies residues 1 to 25; the sequence is MAPRVTPLLAFSLLVLWTFPAPTLG. Cystine bridges form between Cys33–Cys59 and Cys34–Cys75. N-linked (GlcNAc...) asparagine glycosylation is present at Asn100.

This sequence belongs to the intercrine beta (chemokine CC) family. Interacts with TNFAIP6 (via Link domain). In terms of tissue distribution, highly expressed by dendritic cells in mesenteric and peripheral lymph nodes. Significant expression in spleen (T cell zone or periarteriolar lymphatic sheath) and Peyer patches. Low expression in thymus.

Its subcellular location is the secreted. Its function is as follows. Strongly chemotactic for naive (L-selectinhi) CD4 T-cells and for CD8 T-cells and weakly attractive for resting B-cells and memory (L-selectinlo) CD4 T-cells. May play a role in promoting encounters between recirculating T-cells and dendritic cells and in the migration of activated B-cells into the T-zone of secondary lymphoid tissues. Binds to chemokine receptor CCR7. Binds to atypical chemokine receptor ACKR4 and mediates the recruitment of beta-arrestin (ARRB1/2) to ACKR4. The polypeptide is C-C motif chemokine 19 (Ccl19) (Mus musculus (Mouse)).